Reading from the N-terminus, the 82-residue chain is DinI-like protein (82 aa).

Belongs to the DinI family.

The sequence is that of DinI-like protein from Enterobacteria phage VT1-Sakai.